The following is a 1024-amino-acid chain: Protein tiptop (1024 aa).

Residues 20–35 (ELTSPRCQSRDSNTSA) show a composition bias toward polar residues. Disordered stretches follow at residues 20-40 (ELTS…AGAG) and 138-215 (EGEV…ISAD). A compositionally biased stretch (acidic residues) spans 159-175 (DDQEEDQEQDQEQEQEQ). Residues 317 to 341 (FKCVWCKQSFSTLANLTAHMKETQH) form a C2H2-type 1 zinc finger. A disordered region spans residues 350–392 (LPTGGVGTPSAPPPTRLATSASNSACSSSSSSTSSSSNSSKSE). Residues 368-391 (TSASNSACSSSSSSTSSSSNSSKS) show a composition bias toward low complexity. The segment at 426 to 450 (LKCMWCGQSFRSLAEMTSHMQETQH) adopts a C2H2-type 2 zinc-finger fold. Disordered regions lie at residues 466–489 (GDER…SSPS), 519–576 (AQKS…SLDS), 712–759 (SRDR…IKAE), 786–818 (FSME…SLLA), and 868–891 (ETTD…ASAT). The segment covering 477-489 (VPSTSTAAPSSPS) has biased composition (low complexity). Residues 499-523 (LTCKVCDQAFGSLKELSTHMAQKSH) form a C2H2-type 3 zinc finger. Over residues 527 to 537 (SPAPSASPPAA) the composition is skewed to low complexity. A compositionally biased stretch (basic residues) spans 543–558 (KRGRQNRNEKRKKSLP). Low complexity predominate over residues 718–729 (SESSSASRVESS). Residues 745–755 (TPAPPPPPPPT) show a composition bias toward pro residues. A compositionally biased stretch (basic and acidic residues) spans 786 to 795 (FSMEACRESP). Residues 796–808 (RSVSKSPAPQTER) show a composition bias toward polar residues. Residues 874–891 (STGLRSASSAGSSTASAT) are compositionally biased toward low complexity. A C2H2-type 4 zinc finger spans residues 926-949 (IKCSYCDTPFASKGAYRHHLSKVH). The interval 954–1004 (AGEDSPRLKSPAVQSPRSMPLASPRRSASRSPATGSQQPPPSPTISPYDES) is disordered. Residues 968 to 990 (SPRSMPLASPRRSASRSPATGSQ) are compositionally biased toward low complexity.

It belongs to the teashirt C2H2-type zinc-finger protein family. As to expression, expression in the Malpighian tubules (MTs) and stomatogastric nervous system starts at embryonic stage 10. At stage 11, expression in the head domain is initiated in the clypeolabrum in two bilaterally symmetric clusters of cells. At stage 12, expression appears in the central nervous system (CNS) of the trunk and the epidermis. The staining in the hindgut is maintained throughout embryogenesis. At stage 13, expression is present in elongating MTs. The anterior staining is detected in cells that invaginate into the stomodeum and by stage 15 onwards, in cells close to the pharynx. Also expressed in cells of the brain, the second constriction of the gut, the trunk epidermis, the anterior segments of the CNS (the three thoracic and the first two abdominal segments) and in the MTs. From stage 12 onwards, tsh and tio are colocalized in some cells.

It localises to the nucleus. Functionally, tiptop (tio) and teashirt (tsh) have, on the whole, common activities. Tio and tsh repress each other's expression and tsh has a crucial role for trunk patterning that is in part masked by ectopic expression of tiptop. Both genes share a common activity required for the activation of Ser and svb and the maintenance of en and wg. This chain is Protein tiptop (tio), found in Drosophila melanogaster (Fruit fly).